The primary structure comprises 135 residues: Nitrogen fixation protein NifU 1 (135 aa).

The span at 1-10 (MRDMQDDDTK) shows a compositional bias: basic and acidic residues. Positions 1–29 (MRDMQDDDTKSPAPPPAAAAAARRAAGQA) are disordered. The span at 18 to 29 (AAAAARRAAGQA) shows a compositional bias: low complexity.

Belongs to the NifU family.

Its function is as follows. May be involved in the formation or repair of [Fe-S] clusters present in iron-sulfur proteins. This is Nitrogen fixation protein NifU 1 (nifU1) from Rhodobacter capsulatus (Rhodopseudomonas capsulata).